Reading from the N-terminus, the 279-residue chain is uncharacterized protein (279 aa).

The 89-residue stretch at K2–I90 folds into the GIY-YIG domain.

It belongs to the IIV-6 019R family.

This is an uncharacterized protein from Acheta domesticus (House cricket).